The primary structure comprises 270 residues: Replication protein A 32 kDa subunit (270 aa).

Methionine 1 carries the N-acetylmethionine modification. A phosphoserine; by PRKDC mark is found at serine 4 and serine 8. Positions 20–41 (YTQSPGGFGSPTPSQAEKKSRV) are disordered. The residue at position 21 (threonine 21) is a Phosphothreonine; by PRKDC. Serine 23 carries the post-translational modification Phosphoserine; by CDK2. Serine 29 bears the Phosphoserine; by CDK1 mark. Residue serine 33 is modified to Phosphoserine; by PRKDC. Glycyl lysine isopeptide (Lys-Gly) (interchain with G-Cter in ubiquitin) cross-links involve residues lysine 37 and lysine 38. Residues 74–148 (VTIVGIIRHA…KSLVAFKIIP (75 aa)) constitute a DNA-binding region (OB). Positions 171-192 (KPNSQASAGRPSMSNPGMSEPG) are disordered. Residues 187-270 (GMSEPGNFSG…DDHFKSTDAE (84 aa)) are interaction with RAD52, TIPIN, UNG and XPA.

The protein belongs to the replication factor A protein 2 family. As to quaternary structure, component of the replication protein A complex (RPA/RP-A), a heterotrimeric complex composed of RPA1, RPA2 and RPA3. Interacts with PRPF19; the PRP19-CDC5L complex is recruited to the sites of DNA repair where it ubiquitinates the replication protein A complex (RPA). Interacts with SERTAD3. Interacts with TIPIN. Interacts with TIMELESS. Interacts with PPP4R2; the interaction is direct, DNA damage-dependent and mediates the recruitment of the PP4 catalytic subunit PPP4C. Interacts (hyperphosphorylated) with RAD51. Interacts with SMARCAL1; the interaction is direct and mediates the recruitment to the RPA complex of SMARCAL1. Interacts with RAD52 and XPA; those interactions are direct and associate RAD52 and XPA to the RPA complex. Interacts with FBH1. Interacts with ETAA1; the interaction is direct and promotes ETAA1 recruitment at stalled replication forks. Interacts with DDI2. Interacts (in unphosphorylated form via N-terminus) with EIF4EBP3; the interaction enhances EIF4EBP3-mediated inhibition of EIF4E-mediated mRNA nuclear export. Interacts with nuclear UNG (isoform 2); this interaction mediates UNG recruitment to RPA-coated single-stranded DNA at stalled replication forks. In terms of processing, differentially phosphorylated throughout the cell cycle, becoming phosphorylated at the G1-S transition and dephosphorylated in late mitosis. Mainly phosphorylated at Ser-23 and Ser-29, by cyclin A-CDK2 and cyclin B-CDK1, respectively during DNA replication and mitosis. Dephosphorylation may require the serine/threonine-protein phosphatase 4. Phosphorylation at Ser-23 and Ser-29 is a prerequisite for further phosphorylation. Becomes hyperphosphorylated on additional residues including Ser-4, Ser-8, Thr-21 and Ser-33 in response to DNA damage. Hyperphosphorylation is mediated by ATM, ATR and PRKDC. Primarily recruited to DNA repair nuclear foci as a hypophosphorylated form it undergoes subsequent hyperphosphorylation, catalyzed by ATR. Hyperphosphorylation is required for RAD51 recruitment to chromatin and efficient DNA repair. Phosphorylation at Thr-21 depends upon RFWD3 presence. DNA damage-induced 'Lys-63'-linked polyubiquitination by PRPF19 mediates ATRIP recruitment to the RPA complex at sites of DNA damage and activation of ATR. Ubiquitinated by RFWD3 at stalled replication forks in response to DNA damage: ubiquitination by RFWD3 does not lead to degradation by the proteasome and promotes removal of the RPA complex from stalled replication forks, promoting homologous recombination.

Its subcellular location is the nucleus. The protein localises to the PML body. Its function is as follows. As part of the heterotrimeric replication protein A complex (RPA/RP-A), binds and stabilizes single-stranded DNA intermediates, that form during DNA replication or upon DNA stress. It prevents their reannealing and in parallel, recruits and activates different proteins and complexes involved in DNA metabolism. Thereby, it plays an essential role both in DNA replication and the cellular response to DNA damage. In the cellular response to DNA damage, the RPA complex controls DNA repair and DNA damage checkpoint activation. Through recruitment of ATRIP activates the ATR kinase a master regulator of the DNA damage response. It is required for the recruitment of the DNA double-strand break repair factors RAD51 and RAD52 to chromatin in response to DNA damage. Also recruits to sites of DNA damage proteins like XPA and XPG that are involved in nucleotide excision repair and is required for this mechanism of DNA repair. Also plays a role in base excision repair (BER) probably through interaction with UNG. Also recruits SMARCAL1/HARP, which is involved in replication fork restart, to sites of DNA damage. May also play a role in telomere maintenance. This is Replication protein A 32 kDa subunit from Mus musculus (Mouse).